Here is a 509-residue protein sequence, read N- to C-terminus: MEEYQVFXVYLELDRSRQQDFLYPLIFREYIYGLAYGHDLNRPILMENIGYDNKSSLLIAKRLIIRMYQQNHFIISANDSNKNQFLGYNNNLYSQIISEGFAVVVEIPFSLQLSYSLEEAEIVKSYKNFRSIHSIFPFFEEKFSYLKYVSDVRIPYPIHLEISVQTLRYWVKDAPFFHLLRLFLYEYCNSIITPKKPISTFSKRKSNPRIFLFLYNFYVCEYESIFLFLRNKSSHLRLTSFSVLFERIYFYAKIEHLVEVFTGDYSSTLSFFKDLFIHYVRYQGKSILASKNVPLLMNKWKYYLIHLWQCHFDVWSQPGTIHINLLYKHSHFFXGYFSNVQLNLSVVRSQMLENSFLIEIVMKKFHTKVPIISLIRSLAKAKFCNVLGHPISNPVWADSSDFDIIDRFLRICRNLSHYYNGSSKKXSLYRIKYILRLSCIKTLARKHKSTVCAFLKILGSEELLEEFFTEEEEILSLIFPRTSYTLKRLYRGRIWYLDIIFSNDLVNRE.

It belongs to the intron maturase 2 family. MatK subfamily.

Its subcellular location is the plastid. The protein resides in the chloroplast. Usually encoded in the trnK tRNA gene intron. Probably assists in splicing its own and other chloroplast group II introns. The protein is Maturase K of Vatairea macrocarpa.